The following is a 37-amino-acid chain: Large ribosomal subunit protein bL36 (37 aa).

The protein belongs to the bacterial ribosomal protein bL36 family.

The sequence is that of Large ribosomal subunit protein bL36 from Mycoplasma pneumoniae (strain ATCC 29342 / M129 / Subtype 1) (Mycoplasmoides pneumoniae).